Here is a 154-residue protein sequence, read N- to C-terminus: MASVSTHENQEKGPHLPPPSKQSLLFCPKSKLHIHRSEISKIIRECQEESFWKRALPFSLVSMLVTQGLVHHGYLAANPRFGSLPKVALAGILGFGLGKASYIGVCQSKFHSFEGQLRGAGFGPGHNRHCLLTCEECKTKHGLSQERSSQPSAS.

The disordered stretch occupies residues 1–23 (MASVSTHENQEKGPHLPPPSKQS). The region spanning 1–120 (MASVSTHENQ…HSFEGQLRGA (120 aa)) is the OCIA domain. Lys-41 bears the N6-acetyllysine mark.

In terms of assembly, interacts (via OCIA domain) with OCIAD1/ASRIJ and STAT3.

The protein localises to the endosome. Its subcellular location is the mitochondrion. It is found in the mitochondrion inner membrane. Functionally, has an essential role in the assembly of mitochondrial respiratory chain complex III. Is also required for STAT3 activation and plays a role in cell migration. The sequence is that of OCIA domain-containing protein 2 (OCIAD2) from Bos taurus (Bovine).